Reading from the N-terminus, the 305-residue chain is Acetyl-coenzyme A carboxylase carboxyl transferase subunit alpha (305 aa).

Positions 33–280 constitute a CoA carboxyltransferase C-terminal domain; sequence AKLESSTALS…KEQILKDLAD (248 aa).

This sequence belongs to the AccA family. In terms of assembly, acetyl-CoA carboxylase is a heterohexamer composed of biotin carboxyl carrier protein (AccB), biotin carboxylase (AccC) and two subunits each of ACCase subunit alpha (AccA) and ACCase subunit beta (AccD).

It is found in the cytoplasm. The enzyme catalyses N(6)-carboxybiotinyl-L-lysyl-[protein] + acetyl-CoA = N(6)-biotinyl-L-lysyl-[protein] + malonyl-CoA. The protein operates within lipid metabolism; malonyl-CoA biosynthesis; malonyl-CoA from acetyl-CoA: step 1/1. Functionally, component of the acetyl coenzyme A carboxylase (ACC) complex. First, biotin carboxylase catalyzes the carboxylation of biotin on its carrier protein (BCCP) and then the CO(2) group is transferred by the carboxyltransferase to acetyl-CoA to form malonyl-CoA. This Treponema denticola (strain ATCC 35405 / DSM 14222 / CIP 103919 / JCM 8153 / KCTC 15104) protein is Acetyl-coenzyme A carboxylase carboxyl transferase subunit alpha.